Here is a 338-residue protein sequence, read N- to C-terminus: Solute carrier family 35 member B1 homolog (338 aa).

9 helical membrane-spanning segments follow: residues 9-29, 53-73, 84-104, 111-131, 135-155, 168-188, 213-233, 244-264, and 284-304; these read FVIY…VQEK, LALV…LLTI, GSYV…NMAM, TAVV…VLIG, YSWT…LFMY, TLLG…TGAV, LMLG…YFTI, LIAV…ASFG, and VLLF…LVFA. Positions 334 to 338 match the Di-lysine motif motif; that stretch reads KKLNS.

Belongs to the nucleotide-sugar transporter family. SLC35B subfamily.

The protein resides in the endoplasmic reticulum membrane. Probable sugar transporter. The sequence is that of Solute carrier family 35 member B1 homolog (meigo) from Drosophila melanogaster (Fruit fly).